The chain runs to 273 residues: Vacuolar membrane protein YPL162C (273 aa).

At 1–13 (MYVSNGKDTCQLL) the chain is on the vacuolar side. A helical membrane pass occupies residues 14-34 (GPVSLFVQTLMGMTAVIVLLV). The Cytoplasmic portion of the chain corresponds to 35 to 51 (KRNYEHPRRKMIVWSYD). A helical membrane pass occupies residues 52-72 (IGKQIIGSLGIHFLNLGISIL). Topologically, residues 73–97 (KKRRRSLFAITAKGNDDEDQCDWYF) are vacuolar. Residues 98–118 (LNLLLDTTVGIPILWLCLYII) traverse the membrane as a helical segment. Residues 119–156 (EKVLKSLHFQNIESGNYFPSKTVGSHPRKPLFSAFVKQ) lie on the Cytoplasmic side of the membrane. The helical transmembrane segment at 157–177 (LLIFIVGLGVMKFCVFLILNY) threads the bilayer. The Vacuolar portion of the chain corresponds to 178-198 (LEDLAYWFADLILGWSDSWPN). The chain crosses the membrane as a helical span at residues 199–219 (FQVFLVMFVFPILLNCFQYFC). The Cytoplasmic segment spans residues 220 to 273 (VDNVIRLHSESLTITNAENFETNTFLNDEIPDLSEVSNEVPNKDNNISSYGSII).

The protein resides in the vacuole membrane. This chain is Vacuolar membrane protein YPL162C, found in Saccharomyces cerevisiae (strain ATCC 204508 / S288c) (Baker's yeast).